A 95-amino-acid chain; its full sequence is Scytovirin (95 aa).

The tract at residues 3 to 41 (GPTYCWNEANNPGGPNRCSNNKQCDGARTCSSSGFCQGT) is SD1. Disulfide bonds link cysteine 7–cysteine 55, cysteine 20–cysteine 32, cysteine 26–cysteine 38, cysteine 68–cysteine 80, and cysteine 74–cysteine 86. The segment at 51-89 (GPTYCWDEAKNPGGPNRCSNSKQCDGARTCSSSGFCQGT) is SD2.

Has strong anti-HIV activity against T-tropic strains of HIV-1 and weaker activity against M-tropic strains of HIV-1. Inhibits HIV-1 fusion and infection of CD4 LTR beta-gal cells in vitro. Inhibits fusion of HIV infected CEM-SS cells with uninfected CEM-SS cells, and fusion of HIV-1 Env expressing HL2/3 cells with CD4 LTR beta-gal cells. Binds to HIV gp120, HIV gp160 and to a lesser extent HIV gp41. Binding to HIV gp120 is glycosylation dependent. Binds with high specificity to the tetrasaccharide Man-alpha-1,2-Man-alpha-1,6-Man-alpha-1,6-Man and also binds the higher-order oligosaccharides oligomannose 8 and oligomannose 9. Does not bind to monosaccharides, complex or hybrid N-linked oligosaccharides or chitin. The sequence is that of Scytovirin from Scytonema varium.